The chain runs to 649 residues: PTS system mannitol-specific EIICBA component (649 aa).

Residues 13–342 form the PTS EIIC type-2 domain; it reads FGRFLSNMVM…LLMKAQTSTE (330 aa). A run of 6 helical transmembrane segments spans residues 25 to 46, 51 to 71, 135 to 156, 166 to 186, 274 to 293, and 314 to 335; these read IGAF…WVPN, SLVG…TGGK, SAGI…PFVK, VNFL…EPAK, AIAG…AGLV, and LGVV…ALLM. The region spanning 384-475 is the PTS EIIB type-2 domain; the sequence is QSIIVACDAG…LVTQLLAAKR (92 aa). Cysteine 390 (phosphocysteine intermediate; for EIIB activity) is an active-site residue. A Phosphocysteine; by EIIA modification is found at cysteine 390. The 143-residue stretch at 504–646 folds into the PTS EIIA type-2 domain; the sequence is FQLQKENIHL…SDVLSILATS (143 aa). The Tele-phosphohistidine intermediate; for EIIA activity role is filled by histidine 564. Histidine 564 is subject to Phosphohistidine; by HPr.

In terms of assembly, homodimer. An intramolecular phosphotransfer takes places between His-564 and Cys-390.

It localises to the cell inner membrane. It catalyses the reaction D-mannitol(out) + N(pros)-phospho-L-histidyl-[protein] = D-mannitol 1-phosphate(in) + L-histidyl-[protein]. In terms of biological role, the phosphoenolpyruvate-dependent sugar phosphotransferase system (sugar PTS), a major carbohydrate active transport system, catalyzes the phosphorylation of incoming sugar substrates concomitantly with their translocation across the cell membrane. This system is involved in D-mannitol transport. This Vibrio cholerae serotype O1 (strain ATCC 39315 / El Tor Inaba N16961) protein is PTS system mannitol-specific EIICBA component (mtlA).